The chain runs to 411 residues: Branched-chain-amino-acid aminotransferase, cytosolic (411 aa).

Residue Lys247 is modified to N6-(pyridoxal phosphate)lysine.

The protein belongs to the class-IV pyridoxal-phosphate-dependent aminotransferase family. As to quaternary structure, homodimer. Requires pyridoxal 5'-phosphate as cofactor. In terms of processing, the N-terminus is blocked. Brain, low expression in ovary and placenta, but not found in liver, kidney, and skeletal muscle.

The protein resides in the cytoplasm. The catalysed reaction is L-leucine + 2-oxoglutarate = 4-methyl-2-oxopentanoate + L-glutamate. The enzyme catalyses L-isoleucine + 2-oxoglutarate = (S)-3-methyl-2-oxopentanoate + L-glutamate. It catalyses the reaction L-valine + 2-oxoglutarate = 3-methyl-2-oxobutanoate + L-glutamate. Catalyzes the first reaction in the catabolism of the essential branched chain amino acids leucine, isoleucine, and valine. This chain is Branched-chain-amino-acid aminotransferase, cytosolic (Bcat1), found in Rattus norvegicus (Rat).